The following is a 456-amino-acid chain: MLKIYNSLKREKQVFTPIEPNKVRMYVCGMTVYDYCHLGHARVMVVFDMVYRWLKASGYDVTYVRNITDIDDKIIKRAIENGETIQQLTNRFIAFMHEDADALGVQRPDYEPRATEYVPEMLDLIGKLEANGLAYQASDGDVNYAVRKFPGYGKLSGKSLDDLRAGERVEVDSAKQDPLDFVLWKHAKPGEPAWQSPWGDGRPGWHIECSAMSSKLLGQHFDIHGGGQDLQFPHHENEIAQSEGANCCNFVNYWMHNGFVRVDNEKMSKSLGNFFTIRTVLEQFDAEVVRFFILRAHYRSPLNYSDAHLDDARRSLDSLYFALRDVPPAAADIDWSNEFAGRFAAALNEDFDSHGAIAVLFELAAEVNRQKSAGLSCLLKGLGGVIGLLEREPSAYLQGGAGVGGLDEAAVGQMIVDRAAAKKAKNFAEADRIRDELKAAGIILDDSPQGTTWRRA.

Cysteine 28 serves as a coordination point for Zn(2+). The 'HIGH' region motif lies at 30–40 (MTVYDYCHLGH). Residues cysteine 209, histidine 234, and glutamate 238 each coordinate Zn(2+). A 'KMSKS' region motif is present at residues 266-270 (KMSKS). Lysine 269 contributes to the ATP binding site.

Belongs to the class-I aminoacyl-tRNA synthetase family. Monomer. It depends on Zn(2+) as a cofactor.

It is found in the cytoplasm. It catalyses the reaction tRNA(Cys) + L-cysteine + ATP = L-cysteinyl-tRNA(Cys) + AMP + diphosphate. The protein is Cysteine--tRNA ligase of Dechloromonas aromatica (strain RCB).